Reading from the N-terminus, the 301-residue chain is Ribonuclease Z (301 aa).

Zn(2+) is bound by residues His-60, His-62, Asp-64, His-65, His-137, Asp-207, and His-265. Asp-64 functions as the Proton acceptor in the catalytic mechanism.

The protein belongs to the RNase Z family. As to quaternary structure, homodimer. The cofactor is Zn(2+).

It carries out the reaction Endonucleolytic cleavage of RNA, removing extra 3' nucleotides from tRNA precursor, generating 3' termini of tRNAs. A 3'-hydroxy group is left at the tRNA terminus and a 5'-phosphoryl group is left at the trailer molecule.. Functionally, zinc phosphodiesterase, which displays some tRNA 3'-processing endonuclease activity. Probably involved in tRNA maturation, by removing a 3'-trailer from precursor tRNA. This is Ribonuclease Z from Exiguobacterium sibiricum (strain DSM 17290 / CCUG 55495 / CIP 109462 / JCM 13490 / 255-15).